Reading from the N-terminus, the 92-residue chain is RNA-binding protein Hfq (92 aa).

In terms of domain architecture, Sm spans 9 to 68 (DPFLNALRRERVPVSIYLVNGIKLQGQVESFDQFVILLKNTVSQMVYKHAISTVVPSRPF).

Belongs to the Hfq family. In terms of assembly, homohexamer.

Functionally, RNA chaperone that binds small regulatory RNA (sRNAs) and mRNAs to facilitate mRNA translational regulation in response to envelope stress, environmental stress and changes in metabolite concentrations. Also binds with high specificity to tRNAs. This is RNA-binding protein Hfq from Shewanella piezotolerans (strain WP3 / JCM 13877).